A 332-amino-acid polypeptide reads, in one-letter code: MKKHAKVYYSENLVEQVNEFETSFEIKPLERGLGNTLGNALRRTVLSSIPSCAVFGVKIEGIKHEFTVLDDVIEDVVTILNNLKRVRFFYNPSVFSQNSIHVASFLGQKAGQIYARDIESHSGLKIVNPDLYIADVSKVGALKFELFITNGKGFVDFETNKKYVNEVISRLESQIEGSVLAVDSDFSPVLNANYQAVEINSASPIIEEKLNFSIKTDGSIFAKDALSQGAKILIAHLNLLADVENLNKFSADFFGDQEIKEEPIRRFSNSIDALDLSVRSLNALRRAQYYKISDIEKLSQDDFENIKNLGRKSVQEIMEKLQNYKNENKGEN.

The tract at residues Met-1 to Glu-244 is alpha N-terminal domain (alpha-NTD). The tract at residues Ile-259–Asn-332 is alpha C-terminal domain (alpha-CTD).

This sequence belongs to the RNA polymerase alpha chain family. Homodimer. The RNAP catalytic core consists of 2 alpha, 1 beta, 1 beta' and 1 omega subunit. When a sigma factor is associated with the core the holoenzyme is formed, which can initiate transcription.

The enzyme catalyses RNA(n) + a ribonucleoside 5'-triphosphate = RNA(n+1) + diphosphate. Its function is as follows. DNA-dependent RNA polymerase catalyzes the transcription of DNA into RNA using the four ribonucleoside triphosphates as substrates. The sequence is that of DNA-directed RNA polymerase subunit alpha from Mesomycoplasma hyopneumoniae (strain 7448) (Mycoplasma hyopneumoniae).